The chain runs to 71 residues: Large ribosomal subunit protein bL31 (71 aa).

The Zn(2+) site is built by Cys-16, Cys-18, Cys-37, and Cys-40.

It belongs to the bacterial ribosomal protein bL31 family. Type A subfamily. In terms of assembly, part of the 50S ribosomal subunit. It depends on Zn(2+) as a cofactor.

Its function is as follows. Binds the 23S rRNA. The polypeptide is Large ribosomal subunit protein bL31 (Pseudoalteromonas atlantica (strain T6c / ATCC BAA-1087)).